The following is a 282-amino-acid chain: Energy-coupling factor transporter ATP-binding protein EcfA1 (282 aa).

Positions 6 to 243 (ISFDHVTFTY…VEMLKRIGLD (238 aa)) constitute an ABC transporter domain. Position 40–47 (40–47 (GHNGSGKS)) interacts with ATP.

It belongs to the ABC transporter superfamily. Energy-coupling factor EcfA family. As to quaternary structure, forms a stable energy-coupling factor (ECF) transporter complex composed of 2 membrane-embedded substrate-binding proteins (S component), 2 ATP-binding proteins (A component) and 2 transmembrane proteins (T component).

It localises to the cell membrane. Functionally, ATP-binding (A) component of a common energy-coupling factor (ECF) ABC-transporter complex. Unlike classic ABC transporters this ECF transporter provides the energy necessary to transport a number of different substrates. The sequence is that of Energy-coupling factor transporter ATP-binding protein EcfA1 from Lactobacillus delbrueckii subsp. bulgaricus (strain ATCC 11842 / DSM 20081 / BCRC 10696 / JCM 1002 / NBRC 13953 / NCIMB 11778 / NCTC 12712 / WDCM 00102 / Lb 14).